The following is a 141-amino-acid chain: Aspartate 1-decarboxylase 1 (141 aa).

Residue serine 25 is the Schiff-base intermediate with substrate; via pyruvic acid of the active site. Pyruvic acid (Ser) is present on serine 25. Residue threonine 57 participates in substrate binding. The active-site Proton donor is tyrosine 58. 73 to 75 contacts substrate; sequence GPA.

Belongs to the PanD family. As to quaternary structure, heterooctamer of four alpha and four beta subunits. Pyruvate is required as a cofactor. Is synthesized initially as an inactive proenzyme, which is activated by self-cleavage at a specific serine bond to produce a beta-subunit with a hydroxyl group at its C-terminus and an alpha-subunit with a pyruvoyl group at its N-terminus.

Its subcellular location is the cytoplasm. The enzyme catalyses L-aspartate + H(+) = beta-alanine + CO2. It functions in the pathway cofactor biosynthesis; (R)-pantothenate biosynthesis; beta-alanine from L-aspartate: step 1/1. Functionally, catalyzes the pyruvoyl-dependent decarboxylation of aspartate to produce beta-alanine. In Paenarthrobacter aurescens (strain TC1), this protein is Aspartate 1-decarboxylase 1.